We begin with the raw amino-acid sequence, 198 residues long: Molybdopterin synthase catalytic subunit (198 aa).

Positions 1-27 (MASQPPQEPTPTATSTPSTSALASLPP) are enriched in low complexity. Residues 1–40 (MASQPPQEPTPTATSTPSTSALASLPPHLDPTTYPRTLTS) are disordered. Substrate is bound by residues 143-144 (HR), K159, and 166-168 (KRE). Residues 176–198 (EWRENRERDAEGKVVAEKQEERE) form a disordered region.

It belongs to the MoaE family. MOCS2B subfamily. Heterotetramer; composed of 2 small (MOCS2A) and 2 large (MOCS2B) subunits.

Its subcellular location is the cytoplasm. The catalysed reaction is 2 [molybdopterin-synthase sulfur-carrier protein]-C-terminal-Gly-aminoethanethioate + cyclic pyranopterin phosphate + H2O = molybdopterin + 2 [molybdopterin-synthase sulfur-carrier protein]-C-terminal Gly-Gly + 2 H(+). It functions in the pathway cofactor biosynthesis; molybdopterin biosynthesis. Its function is as follows. Catalytic subunit of the molybdopterin synthase complex, a complex that catalyzes the conversion of precursor Z into molybdopterin. Acts by mediating the incorporation of 2 sulfur atoms from thiocarboxylated MOCS2A into precursor Z to generate a dithiolene group. This chain is Molybdopterin synthase catalytic subunit, found in Aspergillus clavatus (strain ATCC 1007 / CBS 513.65 / DSM 816 / NCTC 3887 / NRRL 1 / QM 1276 / 107).